The sequence spans 424 residues: Dapdiamide A synthase (424 aa).

In terms of domain architecture, ATP-grasp spans 120 to 318; it reads QEQLALKGVA…QISKLAQAVL (199 aa). 147–209 is an ATP binding site; the sequence is AGHAHWPVVL…QEFLAGEEFV (63 aa). Positions 275 and 287 each coordinate Mg(2+).

It depends on Mg(2+) as a cofactor. Requires Mn(2+) as cofactor.

The catalysed reaction is 3-[[[(2R,3R)-3-carboxyoxiran-2-yl]carbonyl]amino]-L-alanine + L-valine + ATP = dapdiamide E + ADP + phosphate + H(+). The enzyme catalyses N(3)-fumaramoyl-(S)-2,3-diaminopropanoate + L-valine + ATP = dapdiamide A + ADP + phosphate + H(+). It catalyses the reaction N(3)-fumaramoyl-(S)-2,3-diaminopropanoate + L-isoleucine + ATP = dapdiamide B + ADP + phosphate + H(+). It carries out the reaction N(3)-fumaramoyl-(S)-2,3-diaminopropanoate + L-leucine + ATP = dapdiamide C + ADP + phosphate + H(+). It participates in antibiotic biosynthesis. Its function is as follows. Involved in dapdiamide antibiotics biosynthesis. Ligates N-beta-fumaramoyl-DAP and valine, isoleucine or leucine to form dapdiamides A, B or C, respectively. Also ligates N-beta-epoxysuccinamoyl-DAP and valine to form dapdiamide E. The protein is Dapdiamide A synthase of Enterobacter agglomerans (Erwinia herbicola).